We begin with the raw amino-acid sequence, 346 residues long: Nitrilase 1 (346 aa).

Serine 2 carries the N-acetylserine modification. In terms of domain architecture, CN hydrolase spans 25 to 297; the sequence is VRVTIVQSST…EGLVTADIDL (273 aa). Residue glutamate 65 is the Proton acceptor of the active site. Lysine 152 serves as the catalytic Proton donor. The active-site Nucleophile is cysteine 186.

It belongs to the carbon-nitrogen hydrolase superfamily. Nitrilase family. As to quaternary structure, interacts with DEK3. As to expression, expressed in cotyledons, hypocotyls, leaves, roots, stems, flowers and siliques.

It catalyses the reaction a nitrile + 2 H2O = a carboxylate + NH4(+). In terms of biological role, can convert indole-3-acetonitrile to the plant hormone indole-3-acetic acid. The protein is Nitrilase 1 of Arabidopsis thaliana (Mouse-ear cress).